The chain runs to 375 residues: Probable neutral protease 2 homolog ARB_05817 (375 aa).

The signal sequence occupies residues M1–G19. The propeptide occupies F20–R189. 2 disulfide bridges follow: C197/C267 and C274/C292. Residue H317 participates in Zn(2+) binding. The active site involves E318. H321 and D332 together coordinate Zn(2+).

The protein belongs to the peptidase M35 family. Requires Zn(2+) as cofactor.

It is found in the secreted. It catalyses the reaction Preferential cleavage of bonds with hydrophobic residues in P1'. Also 3-Asn-|-Gln-4 and 8-Gly-|-Ser-9 bonds in insulin B chain.. Probable secreted metalloprotease that shows high activities on basic nuclear substrates such as histone and protamine. May be involved in virulence. This is Probable neutral protease 2 homolog ARB_05817 from Arthroderma benhamiae (strain ATCC MYA-4681 / CBS 112371) (Trichophyton mentagrophytes).